We begin with the raw amino-acid sequence, 194 residues long: MIGYLKGNVIWKAENKVILETGGVGYRVLVPSTVRLKPVGEKLELFVYTYVREDSLDLYGFKTMEERELFETLLSVSGIGPRAAINILSSLSYKKFIEAILTEKVSILKQVSGIGPKTAKRLILELKGKLKDMSGDFEEPLPDNRNTELSDALASLGYSELEIEEALSNADIKNNGSLEENIKKALGYLGSKGS.

A domain I region spans residues 1–62 (MIGYLKGNVI…EDSLDLYGFK (62 aa)). The tract at residues 63–136 (TMEERELFET…KGKLKDMSGD (74 aa)) is domain II. The flexible linker stretch occupies residues 136–140 (DFEEP). Residues 141-194 (LPDNRNTELSDALASLGYSELEIEEALSNADIKNNGSLEENIKKALGYLGSKGS) form a domain III region.

Belongs to the RuvA family. Homotetramer. Forms an RuvA(8)-RuvB(12)-Holliday junction (HJ) complex. HJ DNA is sandwiched between 2 RuvA tetramers; dsDNA enters through RuvA and exits via RuvB. An RuvB hexamer assembles on each DNA strand where it exits the tetramer. Each RuvB hexamer is contacted by two RuvA subunits (via domain III) on 2 adjacent RuvB subunits; this complex drives branch migration. In the full resolvosome a probable DNA-RuvA(4)-RuvB(12)-RuvC(2) complex forms which resolves the HJ.

The protein localises to the cytoplasm. Functionally, the RuvA-RuvB-RuvC complex processes Holliday junction (HJ) DNA during genetic recombination and DNA repair, while the RuvA-RuvB complex plays an important role in the rescue of blocked DNA replication forks via replication fork reversal (RFR). RuvA specifically binds to HJ cruciform DNA, conferring on it an open structure. The RuvB hexamer acts as an ATP-dependent pump, pulling dsDNA into and through the RuvAB complex. HJ branch migration allows RuvC to scan DNA until it finds its consensus sequence, where it cleaves and resolves the cruciform DNA. The protein is Holliday junction branch migration complex subunit RuvA of Halothermothrix orenii (strain H 168 / OCM 544 / DSM 9562).